Consider the following 306-residue polypeptide: Methionyl-tRNA formyltransferase (306 aa).

(6S)-5,6,7,8-tetrahydrofolate is bound at residue 110–113; sequence SLLP.

Belongs to the Fmt family.

It catalyses the reaction L-methionyl-tRNA(fMet) + (6R)-10-formyltetrahydrofolate = N-formyl-L-methionyl-tRNA(fMet) + (6S)-5,6,7,8-tetrahydrofolate + H(+). Functionally, attaches a formyl group to the free amino group of methionyl-tRNA(fMet). The formyl group appears to play a dual role in the initiator identity of N-formylmethionyl-tRNA by promoting its recognition by IF2 and preventing the misappropriation of this tRNA by the elongation apparatus. In Brucella suis biovar 1 (strain 1330), this protein is Methionyl-tRNA formyltransferase.